Here is an 837-residue protein sequence, read N- to C-terminus: GRIP1-associated protein 1 (837 aa).

Alanine 2 is subject to N-acetylalanine. Residues 4-158 adopt a coiled-coil conformation; that stretch reads ALSEEEFQRM…ALQERYGKEA (155 aa). 4 disordered regions span residues 161–180, 555–577, 647–666, and 677–702; these read PSAVSEGQGDPPGDVLPISL, KGKEEELQNVRDQLQQAQEERDG, SEMNSPSRTQTGDSSSVSSF, and SSAIPARSLSSSPQAQPPRPAELSDE. Positions 204-637 form a coiled coil; sequence EQLQGLESSK…LQEILTNSKS (434 aa). Residues 648–666 are compositionally biased toward polar residues; it reads EMNSPSRTQTGDSSSVSSF. A phosphoserine mark is found at serine 651, serine 662, serine 664, serine 665, serine 684, serine 686, serine 687, and serine 688. Residues 678–690 are compositionally biased toward low complexity; the sequence is SAIPARSLSSSPQ. Coiled coils occupy residues 697-731 and 781-810; these read AELSDEEVAELFQRLAETQQEKWMLEEKVKHLEVS and DENLREMNKKLQNMLEEQLTKNMHLHKDME. Serine 826 bears the Phosphoserine mark.

Interacts with GRIP1, GRIP2 and AMPA receptors. Interacts (via C-terminus) with MAPK8/JNK1 and with MAP3K1/MEKK1; the interaction promotes MAP3K1-mediated phosphorylation of MAPK8. Interacts (via N-terminus) with RAB4A (in GTP-bound form). Interacts (via C-terminus) with STX12. Post-translationally, proteolytically cleaved by caspase-3. A minor C-terminal proteolytic fragment of 30 kDa is produced. Proteolytic cleavage is required for JNK signaling activation. In terms of tissue distribution, expressed in the central nervous system; especially in neurons.

It localises to the early endosome membrane. The protein localises to the recycling endosome membrane. The protein resides in the cell projection. Its subcellular location is the axon. It is found in the dendrite. It localises to the synapse. In terms of biological role, regulates the endosomal recycling back to the neuronal plasma membrane, possibly by connecting early and late recycling endosomal domains and promoting segregation of recycling endosomes from early endosomal membranes. Involved in the localization of recycling endosomes to dendritic spines, thereby playing a role in the maintenance of dendritic spine morphology. Required for the activity-induced AMPA receptor recycling to dendrite membranes and for long-term potentiation and synaptic plasticity. Its function is as follows. Functions as a scaffold protein in neurons to facilitate MAP3K1/MEKK1-mediated activation of the JNK1 kinase by phosphorylation, possibly by bringing MAP3K1/MEKK1 and JNK1 in close proximity. This chain is GRIP1-associated protein 1 (Gripap1), found in Rattus norvegicus (Rat).